Here is a 341-residue protein sequence, read N- to C-terminus: MENYYTLSGNQEGVASCYRIAEDSEGVISMWVFQRGLHSSRSVLARTRYTKPKPKPPRRSKVRAPTQTTHHDTDLKVTAPIPPAAANLECNPEHPLWQFFDGGRFMRSAEELDDKSRPWTVPELRRKSFDDLHSLWYACLKERNILAREMHLRRNMQEEGSAHAQLDERVRTTMWRIRHVLSERDWAYRLAHAELGTQQAPLLREVEEAFLAVPEAEDGEAFDMLARLQRAVFGISEYIEENLVDRRFVDGLKYIATLKLRRFAPRDAAVEQLLQASEGGITDAGEAFVIFTAENTLADVKEAADAVNELREQGNKVDRYEEIATVAQYLKKLANAKKVAA.

The tract at residues 44–74 (LARTRYTKPKPKPPRRSKVRAPTQTTHHDTD) is disordered. Basic residues predominate over residues 48 to 62 (RYTKPKPKPPRRSKV).

The protein belongs to the universal ribosomal protein uL29 family. In terms of assembly, component of the mitochondrial large ribosomal subunit. Mature mitochondrial ribosomes consist of a small (37S) and a large (54S) subunit. The 37S subunit contains at least 33 different proteins and 1 molecule of RNA (15S). The 54S subunit contains at least 45 different proteins and 1 molecule of RNA (21S).

Its subcellular location is the mitochondrion. The polypeptide is Large ribosomal subunit protein uL29m (MRPL4) (Eremothecium gossypii (strain ATCC 10895 / CBS 109.51 / FGSC 9923 / NRRL Y-1056) (Yeast)).